The following is a 389-amino-acid chain: Probable transcription factor FL (389 aa).

2 disordered regions span residues 1–41 (MDPN…ANVP) and 140–226 (EHDM…HPFV). Over residues 19-39 (PPAPAPVPPPPPPPPPPPPAN) the composition is skewed to pro residues. The segment covering 159–180 (VTGKKQAKKGSAARKGKKARRK) has biased composition (basic residues). The Nuclear localization signal motif lies at 161 to 168 (GKKQAKKG). A compositionally biased stretch (acidic residues) spans 190–201 (QEDEMDCCDEDG). 3 DNA-binding regions span residues 221–225 (REHPF), 290–297 (NKPKMRHY), and 361–364 (YVPT).

The protein belongs to the FLO/LFY family. Interacts with APO1. As to expression, in very young panicle but not in mature florets, mature leaves, roots or apical meristems.

Its subcellular location is the nucleus. Functionally, probable transcription factor. Together with APO1, involved in the temporal regulation of meristem size and identity during both vegetative and reproductive developments through interaction with APO1. Promotes flowering. The protein is Probable transcription factor FL of Oryza sativa subsp. japonica (Rice).